We begin with the raw amino-acid sequence, 541 residues long: Arginine--tRNA ligase (541 aa).

The 'HIGH' region motif lies at alanine 119–histidine 129.

This sequence belongs to the class-I aminoacyl-tRNA synthetase family. As to quaternary structure, monomer.

The protein resides in the cytoplasm. The catalysed reaction is tRNA(Arg) + L-arginine + ATP = L-arginyl-tRNA(Arg) + AMP + diphosphate. This chain is Arginine--tRNA ligase, found in Helicobacter pylori (strain Shi470).